Reading from the N-terminus, the 214-residue chain is A-type ATP synthase subunit D (214 aa).

This sequence belongs to the V-ATPase D subunit family. In terms of assembly, has multiple subunits with at least A(3), B(3), C, D, E, F, H, I and proteolipid K(x).

The protein resides in the cell membrane. In terms of biological role, component of the A-type ATP synthase that produces ATP from ADP in the presence of a proton gradient across the membrane. This chain is A-type ATP synthase subunit D, found in Thermococcus sibiricus (strain DSM 12597 / MM 739).